Reading from the N-terminus, the 154-residue chain is RNA-binding protein PAB1135 (154 aa).

As to quaternary structure, homodimer in solution.

Its function is as follows. In vitro, binds efficiently double-stranded RNAs in a non-sequence specific manner. In Pyrococcus abyssi (strain GE5 / Orsay), this protein is RNA-binding protein PAB1135.